We begin with the raw amino-acid sequence, 558 residues long: Phosphatidylserine lipase ABHD16A (558 aa).

The next 2 helical transmembrane spans lie at 60–80 (ILALASVFWSISYYSSPFAFF) and 93–113 (VVPFSHYAGTLLVLLAGVACL). The Cytoplasmic portion of the chain corresponds to 114–558 (RGIGRWTNPQ…AQHFQMPWCL (445 aa)). The AB hydrolase-1 domain occupies 281–407 (LVICCEGNAG…LVTRTVRQHL (127 aa)). Active-site charge relay system residues include S355, D430, and H507.

The protein belongs to the AB hydrolase superfamily. ABHD16 family.

It localises to the membrane. The catalysed reaction is 1-heptadecanoyl-2-(5Z,8Z,11Z,14Z-eicosatetraenoyl)-sn-glycero-3-phosphoserine + H2O = 1-heptadecanoyl-sn-glycero-3-phosphoserine + (5Z,8Z,11Z,14Z)-eicosatetraenoate + H(+). The enzyme catalyses 1-hexadecanoyl-2-(9Z-octadecenoyl)-sn-glycero-3-phospho-L-serine + H2O = 1-hexadecanoyl-sn-glycero-3-phospho-L-serine + (9Z)-octadecenoate + H(+). It carries out the reaction 1-octadecanoyl-2-(9Z,12Z-octadecadienoyl)-sn-glycero-3-phosphoserine + H2O = 1-octadecanoyl-sn-glycero-3-phosphoserine + (9Z,12Z)-octadecadienoate + H(+). It catalyses the reaction 1-heptadecanoyl-2-(5Z,8Z,11Z,14Z-eicosatetraenoyl)-sn-glycero-3-phosphocholine + H2O = 1-heptadecanoyl-sn-glycero-3-phosphocholine + (5Z,8Z,11Z,14Z)-eicosatetraenoate + H(+). The catalysed reaction is 1-hexadecanoyl-2-(9Z-octadecenoyl)-sn-glycero-3-phosphoglycerol + H2O = 1-hexadecanoyl-sn-glycero-3-phosphoglycerol + (9Z)-octadecenoate + H(+). The enzyme catalyses 1-hexadecanoyl-2-(9Z-octadecenoyl)-sn-glycero-3-phospho-(1D-myo-inositol) + H2O = 1-hexadecanoyl-sn-glycero-3-phospho-(1D-myo-inositol) + (9Z)-octadecenoate + H(+). It carries out the reaction 1-heptadecanoyl-2-(5Z,8Z,11Z,14Z-eicosatetraenoyl)-sn-glycero-3-phosphoethanolamine + H2O = 1-heptadecanoyl-sn-glycero-3-phosphoethanolamine + (5Z,8Z,11Z,14Z)-eicosatetraenoate + H(+). It catalyses the reaction 1-hexadecanoyl-2-(9Z-octadecenoyl)-sn-glycero-3-phospho-(1'-sn-glycerol) + H2O = 1-hexadecanoyl-sn-glycero-3-phospho-(1'-sn-glycerol) + (9Z)-octadecenoate + H(+). The catalysed reaction is Hydrolyzes glycerol monoesters of long-chain fatty acids.. The enzyme catalyses 1-tetradecanoylglycerol + H2O = tetradecanoate + glycerol + H(+). It carries out the reaction 2-hexadecanoylglycerol + H2O = glycerol + hexadecanoate + H(+). It catalyses the reaction 1-(9Z-octadecenoyl)-glycerol + H2O = glycerol + (9Z)-octadecenoate + H(+). The catalysed reaction is 2-(9Z-octadecenoyl)-glycerol + H2O = glycerol + (9Z)-octadecenoate + H(+). The enzyme catalyses 2-(9Z,12Z-octadecadienoyl)-glycerol + H2O = (9Z,12Z)-octadecadienoate + glycerol + H(+). It carries out the reaction 1-(5Z,8Z,11Z,14Z-eicosatetraenoyl)-glycerol + H2O = glycerol + (5Z,8Z,11Z,14Z)-eicosatetraenoate + H(+). It catalyses the reaction 2-(5Z,8Z,11Z,14Z-eicosatetraenoyl)-glycerol + H2O = glycerol + (5Z,8Z,11Z,14Z)-eicosatetraenoate + H(+). The catalysed reaction is prostaglandin D2-1-glycerol ester + H2O = prostaglandin D2 + glycerol + H(+). The enzyme catalyses 2-glyceryl-15-deoxy-Delta(12,14)-prostaglandin J2 + H2O = 15-deoxy-Delta(12,14)-prostaglandin J2 + glycerol + H(+). It carries out the reaction 1-(9Z,12Z-octadecadienoyl)-glycerol + H2O = (9Z,12Z)-octadecadienoate + glycerol + H(+). In terms of biological role, phosphatidylserine (PS) lipase that mediates the hydrolysis of phosphatidylserine to generate lysophosphatidylserine (LPS). LPS constitutes a class of signaling lipids that regulates immunological and neurological processes. Has no activity towards diacylglycerol, triacylglycerol or lysophosphatidylserine lipase. Also has monoacylglycerol lipase activity, with preference for 1-(9Z,12Z-octadecadienoyl)-glycerol (1-LG) and 2-glyceryl-15-deoxy-Delta(12,14)-prostaglandin J2 (15d-PGJ(2)-G). The chain is Phosphatidylserine lipase ABHD16A from Rattus norvegicus (Rat).